A 706-amino-acid polypeptide reads, in one-letter code: Choline transporter-like protein 2 (706 aa).

Residues 1 to 33 (MGKDSQNYYGKHGTPQKYDPTFKGPIYNRGCTD) are Cytoplasmic-facing. Threonine 14 carries the post-translational modification Phosphothreonine. A helical transmembrane segment spans residues 34–54 (VICCVLLFLAIVGYVAVGIIA). The Extracellular portion of the chain corresponds to 55 to 232 (WTHGDPRKVI…QIFEDYTVSW (178 aa)). Residues asparagine 187 and asparagine 200 are each glycosylated (N-linked (GlcNAc...) asparagine). A helical membrane pass occupies residues 233 to 253 (YWIIIGLVIAMVLSLLFIVLL). Residues 254–256 (RFL) are Cytoplasmic-facing. A helical transmembrane segment spans residues 257–277 (AGIMVWVMIVMVILVLGYGIF). At 278–315 (HCYMEYSRLRGEAGSDVSLVDLGFQTDLRVYLHLRQTW) the chain is on the extracellular side. A helical transmembrane segment spans residues 316 to 336 (MAFMIILSILEVVIILLLIFL). Residues 337–364 (RKRILIAIALIKEASRAVGHVMCSLLYP) lie on the Cytoplasmic side of the membrane. Residues 365 to 385 (LVTFFLLCLCIAYWASTSVFL) form a helical membrane-spanning segment. Over 386–454 (STSNTAVYKV…LQIFNAFMFF (69 aa)) the chain is Extracellular. Asparagine 417 carries an N-linked (GlcNAc...) asparagine glycan. A helical transmembrane segment spans residues 455 to 477 (WLANFVLALGQVTLAGAFASYYW). The Cytoplasmic portion of the chain corresponds to 478 to 504 (AMRKPDDMPAFPLFSAFGRALRYHTGS). Residues 505–525 (LAFGSLILAIVQIIRVMLEYL) form a helical membrane-spanning segment. Residues 526 to 563 (DQRLKAAQNKFAKFLMVCLKCCFWCLEKFIKFLNRNAY) lie on the Extracellular side of the membrane. The chain crosses the membrane as a helical span at residues 564-584 (IMIAIYGTNFCTSARNAFFLL). Topologically, residues 585 to 599 (MRNIIRVAVLDKVTD) are cytoplasmic. Residues 600–620 (FLFLLGKLLIVGSVGILAFFF) traverse the membrane as a helical segment. Residues 621 to 638 (FTHRIRIVQDTAPPLNYY) lie on the Extracellular side of the membrane. A helical membrane pass occupies residues 639–659 (WVPILTVIIGSYLIAHGFFSV). Over 660–706 (YGMCVDTLFLCFLEDLERNDGSAERPYFMSSTLKKLLNKTNKKVAES) the chain is Cytoplasmic.

This sequence belongs to the CTL (choline transporter-like) family. As to quaternary structure, interacts with COCH. Glycosylated, glycosylation differs from tissue to tissue. The molecular mass of the mature glycosylated protein is highest in kidney, followed by lung, colon and spleen, then brain and tongue. Expressed at high levels in lung, colon, inner ear and spleen (at protein level). Progressively lower levels in brain, tongue, liver and kidney (at protein level). In the kidney, prominent expression in glomeruli in the lining of Bowman's capsule and on the mesangial cells adjacent to the vessels within the glomerulus (at protein level). Strongly expressed on the membranes of splenocytes and in lung parenchyme (at protein level). In terms of tissue distribution, expressed at higher levels than isoform 2 in colon, heart, kidney, lung, cochlea, tongue and muscle, as well as in the inner ear. As to expression, predominantly expressed in brain, liver and spleen.

Its subcellular location is the cell membrane. It localises to the mitochondrion outer membrane. The enzyme catalyses choline(out) + n H(+)(in) = choline(in) + n H(+)(out). It carries out the reaction ethanolamine(out) + n H(+)(in) = ethanolamine(in) + n H(+)(out). Functionally, choline/H+ antiporter, mainly in mitochodria. Also acts as a low-affinity ethanolamine/H+ antiporter, regulating the supply of extracellular ethanolamine (Etn) for the CDP-Etn pathway, redistribute intracellular Etn and balance the CDP-Cho and CDP-Etn arms of the Kennedy pathway. In Mus musculus (Mouse), this protein is Choline transporter-like protein 2 (Slc44a2).